The following is a 261-amino-acid chain: Hydroxyethylthiazole kinase (261 aa).

M38 is a binding site for substrate. 2 residues coordinate ATP: R114 and T159. Substrate is bound at residue G186.

Belongs to the Thz kinase family. It depends on Mg(2+) as a cofactor.

It catalyses the reaction 5-(2-hydroxyethyl)-4-methylthiazole + ATP = 4-methyl-5-(2-phosphooxyethyl)-thiazole + ADP + H(+). It participates in cofactor biosynthesis; thiamine diphosphate biosynthesis; 4-methyl-5-(2-phosphoethyl)-thiazole from 5-(2-hydroxyethyl)-4-methylthiazole: step 1/1. Its function is as follows. Catalyzes the phosphorylation of the hydroxyl group of 4-methyl-5-beta-hydroxyethylthiazole (THZ). The polypeptide is Hydroxyethylthiazole kinase (Halalkalibacterium halodurans (strain ATCC BAA-125 / DSM 18197 / FERM 7344 / JCM 9153 / C-125) (Bacillus halodurans)).